An 80-amino-acid polypeptide reads, in one-letter code: Iota-conotoxin-like r11c (80 aa).

The first 19 residues, 1-19 (MKLCLTFLLVLMILASVTG), serve as a signal peptide directing secretion. A propeptide spanning residues 20–35 (EKSSKHTLSRAARVKN) is cleaved from the precursor. Proline 38 and proline 47 each carry 4-hydroxyproline; partial. 4 disulfides stabilise this stretch: cysteine 41–cysteine 55, cysteine 48–cysteine 58, cysteine 54–cysteine 63, and cysteine 57–cysteine 72. Proline 65 bears the 4-hydroxyproline mark. Leucine 78 carries the post-translational modification D-leucine. Residue arginine 80 is a propeptide, removed by a carboxypeptidase.

The natural D-Leu form of the peptide is more potent than the synthetic L-Leu form. Expressed by the venom duct.

The protein resides in the secreted. Iota-conotoxins bind to voltage-gated sodium channels (Nav) and act as agonists by shifting the voltage-dependence of activation to more hyperpolarized levels. Causes circular motion, convulsions, copious urination, rigid paralysis and death upon intracranial injection into mice. Causes unbalanced swimming, swimming in diagonal and vertical motion and death, when injected intraperitoneally into goldfish. L-Leu and D-Leu forms are active on both nerve and muscle. This Conus radiatus (Rayed cone) protein is Iota-conotoxin-like r11c.